The chain runs to 123 residues: Large ribosomal subunit protein bL12 (123 aa).

Belongs to the bacterial ribosomal protein bL12 family. As to quaternary structure, homodimer. Part of the ribosomal stalk of the 50S ribosomal subunit. Forms a multimeric L10(L12)X complex, where L10 forms an elongated spine to which 2 to 4 L12 dimers bind in a sequential fashion. Binds GTP-bound translation factors.

Functionally, forms part of the ribosomal stalk which helps the ribosome interact with GTP-bound translation factors. Is thus essential for accurate translation. The chain is Large ribosomal subunit protein bL12 from Clostridium kluyveri (strain NBRC 12016).